The primary structure comprises 202 residues: uncharacterized protein (202 aa).

Transmembrane regions (helical) follow at residues 34–54 (AAYV…QARI), 102–122 (MGVA…PLVI), and 125–145 (ILPL…FNKA). The segment at 165–202 (NKPAAAVTGTSSNSNNASAKSDGPTITELNENETEKSS) is disordered. Over residues 168–185 (AAAVTGTSSNSNNASAKS) the composition is skewed to low complexity. Residues Ser185 and Ser201 each carry the phosphoserine modification.

This sequence belongs to the PHO88 family.

Its subcellular location is the endoplasmic reticulum membrane. This is an uncharacterized protein from Schizosaccharomyces pombe (strain 972 / ATCC 24843) (Fission yeast).